Reading from the N-terminus, the 345-residue chain is tRNA N6-adenosine threonylcarbamoyltransferase (345 aa).

2 residues coordinate Fe cation: His109 and His113. Residues 136–140 (TVSGG), Asp169, Gly182, Asp186, and Asn284 each bind substrate. Asp312 contributes to the Fe cation binding site.

Belongs to the KAE1 / TsaD family. Fe(2+) serves as cofactor.

It is found in the cytoplasm. The catalysed reaction is L-threonylcarbamoyladenylate + adenosine(37) in tRNA = N(6)-L-threonylcarbamoyladenosine(37) in tRNA + AMP + H(+). Its function is as follows. Required for the formation of a threonylcarbamoyl group on adenosine at position 37 (t(6)A37) in tRNAs that read codons beginning with adenine. Is involved in the transfer of the threonylcarbamoyl moiety of threonylcarbamoyl-AMP (TC-AMP) to the N6 group of A37, together with TsaE and TsaB. TsaD likely plays a direct catalytic role in this reaction. In Chlorobium phaeovibrioides (strain DSM 265 / 1930) (Prosthecochloris vibrioformis (strain DSM 265)), this protein is tRNA N6-adenosine threonylcarbamoyltransferase.